The sequence spans 524 residues: Sexual development regulator velC (524 aa).

4 disordered regions span residues 114-195 (NRVL…PVHS), 322-349 (PGSG…MSSY), 380-413 (VDEE…HRFR), and 503-524 (GMGK…ARVE). 2 stretches are compositionally biased toward polar residues: residues 131 to 153 (TTGS…ENAG) and 178 to 195 (LDSQ…PVHS). Positions 248 to 500 (SSSSRYRLFI…ELGFVELKTR (253 aa)) constitute a Velvet domain. Residues 393 to 402 (PSSTDDSTYD) show a composition bias toward polar residues.

Belongs to the velvet family. VelC subfamily. In terms of assembly, interacts with vosA.

It is found in the nucleus. Velvet-domain-containing protein that acts as a positive regulator of sexual development. Positively regulates the production of the sexual fruiting bodies called cleistothecia. In Emericella nidulans (strain FGSC A4 / ATCC 38163 / CBS 112.46 / NRRL 194 / M139) (Aspergillus nidulans), this protein is Sexual development regulator velC.